Here is a 96-residue protein sequence, read N- to C-terminus: Co-chaperonin GroES (96 aa).

This sequence belongs to the GroES chaperonin family. Heptamer of 7 subunits arranged in a ring. Interacts with the chaperonin GroEL.

It is found in the cytoplasm. Its function is as follows. Together with the chaperonin GroEL, plays an essential role in assisting protein folding. The GroEL-GroES system forms a nano-cage that allows encapsulation of the non-native substrate proteins and provides a physical environment optimized to promote and accelerate protein folding. GroES binds to the apical surface of the GroEL ring, thereby capping the opening of the GroEL channel. The polypeptide is Co-chaperonin GroES (Acinetobacter baumannii (strain AB307-0294)).